Reading from the N-terminus, the 99-residue chain is Nucleoid-associated protein UUR10_0100 (99 aa).

Belongs to the YbaB/EbfC family. In terms of assembly, homodimer.

The protein localises to the cytoplasm. It localises to the nucleoid. Binds to DNA and alters its conformation. May be involved in regulation of gene expression, nucleoid organization and DNA protection. The chain is Nucleoid-associated protein UUR10_0100 from Ureaplasma urealyticum serovar 10 (strain ATCC 33699 / Western).